We begin with the raw amino-acid sequence, 333 residues long: D-2-hydroxyacid dehydrogenase (NAD+) (333 aa).

Residue Tyr-100 coordinates 4-methyl-2-oxopentanoate. His-155, Ile-156, Asp-175, Val-205, Asn-211, Thr-232, Arg-234, and Asp-258 together coordinate NAD(+). The active site involves Arg-234. The active site involves Glu-263. His-295 lines the 4-methyl-2-oxopentanoate pocket. His-295 functions as the Proton donor in the catalytic mechanism.

The protein belongs to the D-isomer specific 2-hydroxyacid dehydrogenase family. In terms of assembly, homodimer.

The catalysed reaction is a (2R)-2-hydroxycarboxylate + NAD(+) = a 2-oxocarboxylate + NADH + H(+). The enzyme catalyses (2R)-hydroxy-4-methylpentanoate + NAD(+) = 4-methyl-2-oxopentanoate + NADH + H(+). It carries out the reaction (R)-3-phenyllactate + NAD(+) = 3-phenylpyruvate + NADH + H(+). With respect to regulation, completely inhibited In the presence of 0.1 mM Hg(2+). No influence on the activity could be detected with Mg(2+) and Ca(2+) and only very weak effects with Cd(2+), Co(2+) and Mn(2+). Reducing agents and thiol group reagents do not affect catalytic activity. Catalyzes the NADH-dependent reversible reduction of various 2-ketocarboxylic acids to the corresponding D-2-hydroxycarboxylic acids. In vitro can use various substrates, including 4-methyl-2-oxopentanoate (2-oxoisocaproate), 2-oxopentanoate, 2-oxohexanoate and phenylpyruvate. In Lacticaseibacillus paracasei (Lactobacillus paracasei), this protein is D-2-hydroxyacid dehydrogenase (NAD+).